A 522-amino-acid chain; its full sequence is Ankyrin repeat and death domain-containing protein 1A (522 aa).

11 ANK repeats span residues 14–43 (PLER…NTRA), 47–76 (VGRV…AVDE), 90–119 (FGMN…KIHC), 123–152 (DGLT…DVAL), 158–187 (LGRT…DHNV), 191–220 (EGNT…DLEE), 224–253 (EGLT…TVNA), 257–286 (KNLS…CANV), 290–319 (QGAS…DVNA), 323–352 (RQQT…DLNL), and 356–385 (QGKT…FYRW). The region spanning 413–501 (SVLWRLASRY…DLAGWSTMAR (89 aa)) is the Death domain.

In Homo sapiens (Human), this protein is Ankyrin repeat and death domain-containing protein 1A (ANKDD1A).